The sequence spans 401 residues: Dual specificity mitogen-activated protein kinase kinase 2 (401 aa).

Met-1 carries the post-translational modification N-acetylmethionine. The residue at position 23 (Ser-23) is a Phosphoserine. Positions 72–370 (FERISELGAG…LKLLMNHAFI (299 aa)) constitute a Protein kinase domain. ATP contacts are provided by residues 78-86 (LGAGNGGVV) and Lys-101. Asp-194 functions as the Proton acceptor in the catalytic mechanism. Ser-222 and Ser-226 each carry phosphoserine; by RAF. The interval 282 to 310 (PVVDGADGEPHSVSPRPRPPGRPISVGHG) is disordered. A phosphoserine mark is found at Ser-293, Ser-295, and Ser-306. Residues Thr-395 and Thr-397 each carry the phosphothreonine modification.

This sequence belongs to the protein kinase superfamily. STE Ser/Thr protein kinase family. MAP kinase kinase subfamily. In terms of assembly, interacts with MORG1. Interacts with SGK1. Interacts with KSR1. Interacts with KSR1 and BRAF; the interaction with KSR1 mediates KSR1-BRAF dimerization. Interacts with GLS. Mg(2+) serves as cofactor. Post-translationally, phosphorylation on Ser/Thr by MAP kinase kinase kinases (RAF or MEKK1) positively regulates the kinase activity. Phosphorylated by MAP2K1/MEK1. Low levels of autophosphorylation have been observed. As to expression, expressed in adult intestine, kidney, liver, lung, pancreas, spleen, thymus, and at high levels in the neonatal brain. Lower expression is found in adult brain and heart.

The protein localises to the cytoplasm. Its subcellular location is the membrane. It catalyses the reaction L-seryl-[protein] + ATP = O-phospho-L-seryl-[protein] + ADP + H(+). It carries out the reaction L-threonyl-[protein] + ATP = O-phospho-L-threonyl-[protein] + ADP + H(+). The catalysed reaction is L-tyrosyl-[protein] + ATP = O-phospho-L-tyrosyl-[protein] + ADP + H(+). Inhibited by serine/threonine phosphatase 2A. Catalyzes the concomitant phosphorylation of a threonine and a tyrosine residue in a Thr-Glu-Tyr sequence located in MAP kinases. Activates the ERK1 and ERK2 MAP kinases. Activates BRAF in a KSR1 or KSR2-dependent manner; by binding to KSR1 or KSR2 releases the inhibitory intramolecular interaction between KSR1 or KSR2 protein kinase and N-terminal domains which promotes KSR1 or KSR2-BRAF dimerization and BRAF activation. The chain is Dual specificity mitogen-activated protein kinase kinase 2 (Map2k2) from Mus musculus (Mouse).